The chain runs to 447 residues: Rab GDP dissociation inhibitor alpha (447 aa).

Phosphoserine is present on Ser-427.

It belongs to the Rab GDI family. In terms of assembly, interacts with RHOH. Interacts with the non-phosphorylated forms of RAB1A, RAB3A, RAB5A, RAB5B, RAB5C, RAB8A, RAB8B, RAB10, RAB12, RAB35, and RAB43. As to expression, high expression in brain, lower in other tissues.

It is found in the cytoplasm. The protein localises to the golgi apparatus. Its subcellular location is the trans-Golgi network. Regulates the GDP/GTP exchange reaction of most Rab proteins by inhibiting the dissociation of GDP from them, and the subsequent binding of GTP to them. Promotes the dissociation of GDP-bound Rab proteins from the membrane and inhibits their activation. Promotes the dissociation of RAB1A, RAB3A, RAB5A and RAB10 from membranes. The protein is Rab GDP dissociation inhibitor alpha (Gdi1) of Rattus norvegicus (Rat).